We begin with the raw amino-acid sequence, 345 residues long: NADH-quinone oxidoreductase subunit H 1 (345 aa).

9 helical membrane passes run 11 to 31, 50 to 70, 84 to 104, 115 to 135, 161 to 181, 187 to 207, 248 to 268, 277 to 297, and 309 to 329; these read IILTIAAQGLLVIAFVMISLL, PNVVGAFGLLQTVADAAKYIF, FFLAPLISFVLAVLAWAVIPF, VAILFVFAASSLEVYGVIMGG, LGLIIIGIIISTGSMNLSHIV, AFGLFNWYWLPHLPMVALFFI, YIAIFLMCALMSLLFFGGWLS, VFWMVAKMAFFFFLFAMVKAI, and IGWKVFLPFSLGWVVLVAFLA.

This sequence belongs to the complex I subunit 1 family. NDH-1 is composed of 14 different subunits. Subunits NuoA, H, J, K, L, M, N constitute the membrane sector of the complex.

The protein resides in the cell inner membrane. It catalyses the reaction a quinone + NADH + 5 H(+)(in) = a quinol + NAD(+) + 4 H(+)(out). In terms of biological role, NDH-1 shuttles electrons from NADH, via FMN and iron-sulfur (Fe-S) centers, to quinones in the respiratory chain. The immediate electron acceptor for the enzyme in this species is believed to be ubiquinone. Couples the redox reaction to proton translocation (for every two electrons transferred, four hydrogen ions are translocated across the cytoplasmic membrane), and thus conserves the redox energy in a proton gradient. This subunit may bind ubiquinone. The polypeptide is NADH-quinone oxidoreductase subunit H 1 (Cereibacter sphaeroides (strain ATCC 17023 / DSM 158 / JCM 6121 / CCUG 31486 / LMG 2827 / NBRC 12203 / NCIMB 8253 / ATH 2.4.1.) (Rhodobacter sphaeroides)).